The chain runs to 278 residues: Pantothenate synthetase (278 aa).

26–33 serves as a coordination point for ATP; that stretch reads MGNLHEGH. His33 (proton donor) is an active-site residue. Gln57 provides a ligand contact to (R)-pantoate. Gln57 serves as a coordination point for beta-alanine. 144 to 147 lines the ATP pocket; it reads GKKD. Gln150 contributes to the (R)-pantoate binding site. ATP-binding positions include Gly173 and 181–184; that span reads LSSR.

Belongs to the pantothenate synthetase family. As to quaternary structure, homodimer.

It is found in the cytoplasm. It catalyses the reaction (R)-pantoate + beta-alanine + ATP = (R)-pantothenate + AMP + diphosphate + H(+). It functions in the pathway cofactor biosynthesis; (R)-pantothenate biosynthesis; (R)-pantothenate from (R)-pantoate and beta-alanine: step 1/1. Its function is as follows. Catalyzes the condensation of pantoate with beta-alanine in an ATP-dependent reaction via a pantoyl-adenylate intermediate. The chain is Pantothenate synthetase from Neisseria meningitidis serogroup C / serotype 2a (strain ATCC 700532 / DSM 15464 / FAM18).